A 186-amino-acid chain; its full sequence is UPF0397 protein SGO_0469 (186 aa).

The next 5 helical transmembrane spans lie at 14-34 (VVATGIGAALFVVIGMVSIPT), 50-70 (LFGVVFGPIVGFLTGFIGHAL), 77-97 (GNPWWTWVLASGLFGLVVGLL), 119-139 (AQFVANALVWVVIAPLGDILI), and 152-172 (VVATVANGLTVAVAGTLLLIA).

It belongs to the UPF0397 family.

It is found in the cell membrane. This is UPF0397 protein SGO_0469 from Streptococcus gordonii (strain Challis / ATCC 35105 / BCRC 15272 / CH1 / DL1 / V288).